Consider the following 238-residue polypeptide: MQIKTKAIVISAIKYQEKSLIVKCFTLSDGLKSYFVRDAFSSKKSNQKIAYFQPLTILEIEAVHKNKGTLERFKEVKIATPFHSIHYDVIKSTIVIFISEILHHSIHEEEKNEAFFTFLETALHWLDNHDQIANFHLILLLETTKYLGFYPDISNTEHPFFEMTEGLFSPFHAISSLTEHETNLFKKLIDLKFDNSNTNTLHSTERQILLKILINYYSYHLDGFKKPKSLEVLKEVFS.

Belongs to the RecO family.

Functionally, involved in DNA repair and RecF pathway recombination. The chain is DNA repair protein RecO from Flavobacterium psychrophilum (strain ATCC 49511 / DSM 21280 / CIP 103535 / JIP02/86).